Here is a 166-residue protein sequence, read N- to C-terminus: MASGVAVSDGVIKVFNDMKVRKSSTPEEVKKRKKAVLFCLSEDKKNIILEEGKEILVGDVGQTVDDPYTTFVKMLPDKDCRYALYDATYETKESKKEDLVFIFWAPESAPLKSKMIYASSKDAIKKKLTGIKHELQANCYEEVKDRCTLAEKLGGSAVISLEGKPL.

At Ala2 the chain carries N-acetylalanine. Residues Ser3 and Ser8 each carry the phosphoserine modification. In terms of domain architecture, ADF-H spans 4–153 (GVAVSDGVIK…KDRCTLAEKL (150 aa)). Lys13 is subject to N6-acetyllysine. Thr25 carries the phosphothreonine modification. Positions 30 to 34 (KKRKK) match the Nuclear localization signal motif. Position 41 is a phosphoserine (Ser41). Tyr68 is modified (phosphotyrosine). N6-acetyllysine is present on Lys73. A Glycyl lysine isopeptide (Lys-Gly) (interchain with G-Cter in SUMO2) cross-link involves residue Lys132. At Tyr140 the chain carries Phosphotyrosine. N6-acetyllysine is present on Lys144. Ser156 carries the phosphoserine modification.

It belongs to the actin-binding proteins ADF family. Can bind G- and F-actin in a 1:1 ratio of cofilin to actin. It is a major component of intranuclear and cytoplasmic actin rods. Interacts with the subcortical maternal complex (SCMC) via interaction with TLE6 and NLRP5. Interacts with C9orf72. Post-translationally, inactivated by phosphorylation on Ser-3. Phosphorylated on Ser-3 in resting cells. Dephosphorylated by PDXP/chronophin; this restores its activity in promoting actin filament depolymerization. The phosphorylation of Ser-24 may prevent recognition of the nuclear localization signal. Phosphorylated via a ARRB1-RAC1-LIMK1-PAK1 cascade upon active ligand stimulation of atypical chemokine receptor ACKR2.

The protein localises to the nucleus matrix. It is found in the cytoplasm. The protein resides in the cytoskeleton. Its subcellular location is the cell projection. It localises to the ruffle membrane. The protein localises to the lamellipodium membrane. It is found in the lamellipodium. The protein resides in the growth cone. Its subcellular location is the axon. Binds to F-actin and exhibits pH-sensitive F-actin depolymerizing activity. Important for normal progress through mitosis and normal cytokinesis. In conjunction with the subcortical maternal complex (SCMC), plays an essential role for zygotes to progress beyond the first embryonic cell divisions via regulation of actin dynamics. Required for the centralization of the mitotic spindle and symmetric division of zygotes. Plays a role in the regulation of cell morphology and cytoskeletal organization in epithelial cells. Required for the up-regulation of atypical chemokine receptor ACKR2 from endosomal compartment to cell membrane, increasing its efficiency in chemokine uptake and degradation. Required for neural tube morphogenesis and neural crest cell migration. The chain is Cofilin-1 (Cfl1) from Rattus norvegicus (Rat).